Consider the following 141-residue polypeptide: Large ribosomal subunit protein uL11 (141 aa).

The protein belongs to the universal ribosomal protein uL11 family. Part of the ribosomal stalk of the 50S ribosomal subunit. Interacts with L10 and the large rRNA to form the base of the stalk. L10 forms an elongated spine to which L12 dimers bind in a sequential fashion forming a multimeric L10(L12)X complex. One or more lysine residues are methylated.

Its function is as follows. Forms part of the ribosomal stalk which helps the ribosome interact with GTP-bound translation factors. The protein is Large ribosomal subunit protein uL11 of Pediococcus pentosaceus (strain ATCC 25745 / CCUG 21536 / LMG 10740 / 183-1w).